We begin with the raw amino-acid sequence, 848 residues long: Oligopeptide transport ATP-binding protein OppF (848 aa).

One can recognise an ABC transporter domain in the interval 13-785; it reads VKALSMMFKV…PVHPYTRSLI (773 aa). 47–54 serves as a coordination point for ATP; the sequence is GESGSGKS.

It belongs to the ABC transporter superfamily. In terms of assembly, the complex is composed of two ATP-binding proteins (OppD and OppF), two transmembrane proteins (OppB and OppC) and a solute-binding protein (OppA).

The protein resides in the cell membrane. The catalysed reaction is a [peptide](out) + ATP + H2O = a [peptide](in) + ADP + phosphate + H(+). Part of the ABC transporter complex OppABCDF involved in the uptake of oligopeptides. Probably responsible for energy coupling to the transport system. The protein is Oligopeptide transport ATP-binding protein OppF (oppF) of Mycoplasma genitalium (strain ATCC 33530 / DSM 19775 / NCTC 10195 / G37) (Mycoplasmoides genitalium).